The chain runs to 487 residues: Glutamyl-tRNA(Gln) amidotransferase subunit A (487 aa).

Active-site charge relay system residues include Lys-74 and Ser-149. Ser-173 acts as the Acyl-ester intermediate in catalysis.

Belongs to the amidase family. GatA subfamily. Heterotrimer of A, B and C subunits.

It carries out the reaction L-glutamyl-tRNA(Gln) + L-glutamine + ATP + H2O = L-glutaminyl-tRNA(Gln) + L-glutamate + ADP + phosphate + H(+). In terms of biological role, allows the formation of correctly charged Gln-tRNA(Gln) through the transamidation of misacylated Glu-tRNA(Gln) in organisms which lack glutaminyl-tRNA synthetase. The reaction takes place in the presence of glutamine and ATP through an activated gamma-phospho-Glu-tRNA(Gln). In Prochlorococcus marinus (strain MIT 9211), this protein is Glutamyl-tRNA(Gln) amidotransferase subunit A.